The primary structure comprises 292 residues: Undecaprenyl-diphosphatase (292 aa).

7 helical membrane-spanning segments follow: residues 1-21 (MSLVSAALFGLVQALTEFLPV), 46-66 (FVTIIQAGTTLAVLIYFRADI), 88-108 (ARLGWYILLGTLPAALAGKLL), 114-134 (ALGNWVIAGSLVGLGLVLLAA), 192-212 (FLLSVPITLAAGAYKLWSTVP), 225-245 (VVGTVVSAVAGYLVIDWLLAW), and 253-273 (VFVVWRIAAGAAIAALILSGV).

The protein belongs to the UppP family.

Its subcellular location is the cell inner membrane. It catalyses the reaction di-trans,octa-cis-undecaprenyl diphosphate + H2O = di-trans,octa-cis-undecaprenyl phosphate + phosphate + H(+). Functionally, catalyzes the dephosphorylation of undecaprenyl diphosphate (UPP). Confers resistance to bacitracin. The chain is Undecaprenyl-diphosphatase from Anaeromyxobacter dehalogenans (strain 2CP-C).